We begin with the raw amino-acid sequence, 78 residues long: Acyl carrier protein (78 aa).

One can recognise a Carrier domain in the interval 1–76 (MALFEDIQAV…DVVKYIEDNK (76 aa)). Position 36 is an O-(pantetheine 4'-phosphoryl)serine (serine 36).

Belongs to the acyl carrier protein (ACP) family. 4'-phosphopantetheine is transferred from CoA to a specific serine of apo-ACP by AcpS. This modification is essential for activity because fatty acids are bound in thioester linkage to the sulfhydryl of the prosthetic group.

It is found in the cytoplasm. It participates in lipid metabolism; fatty acid biosynthesis. Its function is as follows. Carrier of the growing fatty acid chain in fatty acid biosynthesis. In Helicobacter acinonychis (strain Sheeba), this protein is Acyl carrier protein.